Here is a 206-residue protein sequence, read N- to C-terminus: Thymidylate kinase (206 aa).

11–18 (GIDGAGKT) provides a ligand contact to ATP.

This sequence belongs to the thymidylate kinase family.

The enzyme catalyses dTMP + ATP = dTDP + ADP. Functionally, phosphorylation of dTMP to form dTDP in both de novo and salvage pathways of dTTP synthesis. In Burkholderia vietnamiensis (strain G4 / LMG 22486) (Burkholderia cepacia (strain R1808)), this protein is Thymidylate kinase.